A 309-amino-acid chain; its full sequence is L-arabinose 1-dehydrogenase (NAD(P)(+)) (309 aa).

NADP(+) contacts are provided by residues I15 and 37–38 (SR). K91 (proton donor) is an active-site residue. An NADP(+)-binding site is contributed by D169.

It belongs to the Gfo/Idh/MocA family. Monomer.

The enzyme catalyses alpha-L-arabinopyanose + NAD(+) = L-arabinono-1,4-lactone + NADH + H(+). It carries out the reaction alpha-L-arabinopyanose + NADP(+) = L-arabinono-1,4-lactone + NADPH + H(+). It catalyses the reaction D-galactose + NAD(+) = D-galactono-1,4-lactone + NADH + H(+). The catalysed reaction is D-galactose + NADP(+) = D-galactono-1,5-lactone + NADPH + H(+). Its pathway is carbohydrate degradation; L-arabinose degradation via L-arabinono-1,4-lactone pathway. In terms of biological role, catalyzes the NAD(P)(+)-dependent conversion of L-arabinose to L-arabino-gamma-lactone. Is involved in a degradation pathway of L-arabinose that allows A.brasilense to grow on L-arabinose as a sole carbon source. Prefers NADP(+) to NAD(+) as electron acceptor. Displays high catalytic efficiency for both L-arabinose and D-galactose in vitro. However, the enzyme appears to be involved in the metabolism of L-arabinose but not D-galactose in vivo. To a lesser extent, is also active on D-talose and D-xylose as substrates in vitro, but not with D-arabinose, D-glucose, D-ribose, L-xylose, L-mannose, L-lyxose, and D-fructose. This is L-arabinose 1-dehydrogenase (NAD(P)(+)) (araA) from Azospirillum brasilense.